The following is a 729-amino-acid chain: MKKLVAQSVIDAFFDGTHSDPFAVLGMHETHNGIEIRVLLPEAHRVIVIDKETHKAVVELELVDERGFFNAIVPKANQFFAYELQVYWGKESQILEDPYRFHPMINELDNWLLAEGSHLRPYEVLGAHFVEYDNVAGVNFRVWAPNAKRVSVVGDFNYWDGRRHPMRFHPASGIWELFLPKVALGQLYKFELIDSNNQLRLKADPYAFAAQLRPDTASQVSALPEIVEMTEKRRAANQSDKPISIYEVHLGSWRRNLENNFWLDYDEIADELIPYVKEMGFTHIELLPISEYPFDGSWGYQPLGLYAPTSRFGTPDGFKRLIEKAHESGINVILDWVPGHFPSDTHGLAAFDGTSLYEYADPKEGYHQDWNTLIYNYGRHEVKNYLSGNALYWVERFGLDGLRVDAVASMIYRDYSRRDGEWVPNQYGGRENLEAIEFLKHTNYVLGTELPGVAAIAEESTSFPGVTLPPEHGGLGFHYKWNMGWMNDTLEYMKLDPVYRQYHHGKMTFAMLYQYSENFVLPLSHDEVVHGKGSLITKMSGDTWQKFANLRAYYGYMWAFPGKKLLFMGNEFAQGREWNYQESLDWFLLDDGQGGGWHSGVQRLVKDLNKTYQNQTALFELDTNPQGFEWLVVDDNQNSVFAFERRSKSGEVIIVVSNFTPVPRDNYRIGVNEPGKYEEILNTDSAYYKGSNLGNYGEVIAEEIENHGKAQSISVMVPPLATVYLRLKK.

D405 functions as the Nucleophile in the catalytic mechanism. E458 functions as the Proton donor in the catalytic mechanism.

Belongs to the glycosyl hydrolase 13 family. GlgB subfamily. Monomer.

The enzyme catalyses Transfers a segment of a (1-&gt;4)-alpha-D-glucan chain to a primary hydroxy group in a similar glucan chain.. It functions in the pathway glycan biosynthesis; glycogen biosynthesis. Its function is as follows. Catalyzes the formation of the alpha-1,6-glucosidic linkages in glycogen by scission of a 1,4-alpha-linked oligosaccharide from growing alpha-1,4-glucan chains and the subsequent attachment of the oligosaccharide to the alpha-1,6 position. The chain is 1,4-alpha-glucan branching enzyme GlgB from Mannheimia succiniciproducens (strain KCTC 0769BP / MBEL55E).